The chain runs to 225 residues: 3-dehydroquinate dehydratase (225 aa).

3-dehydroquinate-binding positions include 30 to 32 and Arg-62; that span reads EWR. The active-site Proton donor/acceptor is His-118. Lys-143 functions as the Schiff-base intermediate with substrate in the catalytic mechanism. 3-dehydroquinate contacts are provided by Arg-186 and Gln-209.

It belongs to the type-I 3-dehydroquinase family. Homodimer.

The catalysed reaction is 3-dehydroquinate = 3-dehydroshikimate + H2O. It participates in metabolic intermediate biosynthesis; chorismate biosynthesis; chorismate from D-erythrose 4-phosphate and phosphoenolpyruvate: step 3/7. Functionally, involved in the third step of the chorismate pathway, which leads to the biosynthesis of aromatic amino acids. Catalyzes the cis-dehydration of 3-dehydroquinate (DHQ) and introduces the first double bond of the aromatic ring to yield 3-dehydroshikimate. This Streptococcus agalactiae serotype Ia (strain ATCC 27591 / A909 / CDC SS700) protein is 3-dehydroquinate dehydratase.